A 649-amino-acid chain; its full sequence is Threonine--tRNA ligase (649 aa).

One can recognise a TGS domain in the interval 1–63 (MSSIKITFPD…KEDGSIEIIT (63 aa)). The segment at 245–543 (DHRVIGNELD…LTEMYKGAFP (299 aa)) is catalytic. Zn(2+) is bound by residues Cys339, His390, and His520.

The protein belongs to the class-II aminoacyl-tRNA synthetase family. Homodimer. The cofactor is Zn(2+).

Its subcellular location is the cytoplasm. It catalyses the reaction tRNA(Thr) + L-threonine + ATP = L-threonyl-tRNA(Thr) + AMP + diphosphate + H(+). Functionally, catalyzes the attachment of threonine to tRNA(Thr) in a two-step reaction: L-threonine is first activated by ATP to form Thr-AMP and then transferred to the acceptor end of tRNA(Thr). Also edits incorrectly charged L-seryl-tRNA(Thr). The sequence is that of Threonine--tRNA ligase from Ligilactobacillus salivarius (strain UCC118) (Lactobacillus salivarius).